The primary structure comprises 78 residues: Putative membrane protein insertion efficiency factor (78 aa).

It belongs to the UPF0161 family.

The protein localises to the cell membrane. Functionally, could be involved in insertion of integral membrane proteins into the membrane. The sequence is that of Putative membrane protein insertion efficiency factor from Bacillus cereus (strain G9842).